A 244-amino-acid polypeptide reads, in one-letter code: Krueppel-like factor 9 (244 aa).

Disordered stretches follow at residues 24 to 51 (VPEHGGAPDAERLRLPEREVTKEHGDPG) and 80 to 142 (SVCS…SEKR). Residues 32–51 (DAERLRLPEREVTKEHGDPG) show a composition bias toward basic and acidic residues. Position 122 is a phosphoserine (S122). 3 consecutive C2H2-type zinc fingers follow at residues 143 to 167 (HKCPYSGCGKVYGKSSHLKAHYRVH), 173 to 197 (FPCTWPDCLKKFSRSDELTRHYRTH), and 203 to 225 (FRCPLCEKRFMRSDHLTKHARRH).

The protein belongs to the Sp1 C2H2-type zinc-finger protein family. In terms of assembly, interacts with ZZEF1.

It is found in the nucleus. Transcription factor that binds to GC box promoter elements. Selectively activates mRNA synthesis from genes containing tandem repeats of GC boxes but represses genes with a single GC box. Acts as an epidermal circadian transcription factor regulating keratinocyte proliferation. In Sus scrofa (Pig), this protein is Krueppel-like factor 9 (KLF9).